We begin with the raw amino-acid sequence, 316 residues long: Cytochrome c biogenesis protein CcsA (316 aa).

8 consecutive transmembrane segments (helical) span residues 12–32 (HISLSIILIVITIFLMNLLVY), 44–64 (GMVASFLCITGLLVIRWIYSG), 71–91 (LYESLMFLSWSFSIFYMIPYF), 98–118 (LNVLTAPGTIFTQGFATSGVL), 145–165 (LSYAALLCGSLLSVALLVILF), 222–242 (VISLGFLFLTIGILSGAVWAN), 256–270 (TWAFITWTIFAIYLH), and 283–303 (AIVASIGFFIIWICYFGVNLL).

This sequence belongs to the CcmF/CycK/Ccl1/NrfE/CcsA family. In terms of assembly, may interact with Ccs1.

Its subcellular location is the plastid. The protein resides in the chloroplast thylakoid membrane. Its function is as follows. Required during biogenesis of c-type cytochromes (cytochrome c6 and cytochrome f) at the step of heme attachment. The protein is Cytochrome c biogenesis protein CcsA of Ranunculus macranthus (Large buttercup).